Reading from the N-terminus, the 298-residue chain is Cell wall protein DAN1 (298 aa).

Residues 1–19 (MSRISILAVAAALVASATA) form the signal peptide. Residues 122 to 168 (PASTTEASSTSTSEASSAATESSSSSESSAETSSNAASTQATVSSES) are disordered. Residue Asn-275 is the site of GPI-anchor amidated asparagine attachment. Positions 276-298 (GANKFNNGVFGAAAIAGAAALLL) are cleaved as a propeptide — removed in mature form.

Belongs to the SRP1/TIP1 family. In terms of processing, extensively O-glycosylated. Post-translationally, the GPI-anchor is attached to the protein in the endoplasmic reticulum and serves to target the protein to the cell surface. There, the glucosamine-inositol phospholipid moiety is cleaved off and the GPI-modified mannoprotein is covalently attached via its lipidless GPI glycan remnant to the 1,6-beta-glucan of the outer cell wall layer.

The protein localises to the secreted. Its subcellular location is the cell wall. The protein resides in the membrane. Functionally, component of the cell wall. The protein is Cell wall protein DAN1 (DAN1) of Saccharomyces cerevisiae (strain ATCC 204508 / S288c) (Baker's yeast).